We begin with the raw amino-acid sequence, 37 residues long: Large ribosomal subunit protein bL36c (37 aa).

Belongs to the bacterial ribosomal protein bL36 family.

It is found in the plastid. The protein resides in the chloroplast. The polypeptide is Large ribosomal subunit protein bL36c (Dioscorea elephantipes (Elephant's foot yam)).